An 879-amino-acid polypeptide reads, in one-letter code: Protein translocase subunit SecA (879 aa).

ATP contacts are provided by residues Q87, 105-109 (GEGKT), and D509. Residues 834–879 (IAEDSEKLKPITGTKKPKRNDPCPCGSGKKYKNCCGQSGPKKGLLA) form a disordered region. The Zn(2+) site is built by C856, C858, C867, and C868.

Belongs to the SecA family. In terms of assembly, monomer and homodimer. Part of the essential Sec protein translocation apparatus which comprises SecA, SecYEG and auxiliary proteins SecDF-YajC and YidC. It depends on Zn(2+) as a cofactor.

Its subcellular location is the cell inner membrane. It is found in the cytoplasm. It catalyses the reaction ATP + H2O + cellular proteinSide 1 = ADP + phosphate + cellular proteinSide 2.. Functionally, part of the Sec protein translocase complex. Interacts with the SecYEG preprotein conducting channel. Has a central role in coupling the hydrolysis of ATP to the transfer of proteins into and across the cell membrane, serving as an ATP-driven molecular motor driving the stepwise translocation of polypeptide chains across the membrane. In Sulfurovum sp. (strain NBC37-1), this protein is Protein translocase subunit SecA.